The following is a 256-amino-acid chain: Phosphate import ATP-binding protein PstB (256 aa).

An ABC transporter domain is found at 10 to 251 (IRTVNVNFYY…PEQKQTEDYI (242 aa)). 42 to 49 (GPSGCGKS) contacts ATP.

Belongs to the ABC transporter superfamily. Phosphate importer (TC 3.A.1.7) family. As to quaternary structure, the complex is composed of two ATP-binding proteins (PstB), two transmembrane proteins (PstC and PstA) and a solute-binding protein (PstS).

The protein resides in the cell inner membrane. It catalyses the reaction phosphate(out) + ATP + H2O = ADP + 2 phosphate(in) + H(+). Part of the ABC transporter complex PstSACB involved in phosphate import. Responsible for energy coupling to the transport system. This chain is Phosphate import ATP-binding protein PstB, found in Syntrophus aciditrophicus (strain SB).